The sequence spans 187 residues: Probable chemoreceptor glutamine deamidase CheD 1 (187 aa).

It belongs to the CheD family.

It catalyses the reaction L-glutaminyl-[protein] + H2O = L-glutamyl-[protein] + NH4(+). Its function is as follows. Probably deamidates glutamine residues to glutamate on methyl-accepting chemotaxis receptors (MCPs), playing an important role in chemotaxis. This is Probable chemoreceptor glutamine deamidase CheD 1 from Ruegeria sp. (strain TM1040) (Silicibacter sp.).